A 335-amino-acid polypeptide reads, in one-letter code: MGHPPLLPLLLLLHTCVPASWGLRCMQCKTNGDCRVEECALGQDLCRTTIVRLWEEGEELELVEKSCTHSEKTNRTLSYRTGLKITSLTEVVCGLDLCNQGNSGRAVTYSRSRYLECISCGSSDMSCERGRHQSLQCRSPEEQCLDVVTHWIQEGEEGRPKDDRHLRGCGYLPGCPGSNGFHNNDTFHFLKCCNTTKCNEGPILELENLPQNGRQCYSCKGNSTHGCSSEETFLIDCRGPMNQCLVATGTHEPKNQSYMVRGCATASMCQHAHLGDAFSMNHIDVSCCTKSGCNHPDLDVQYRSGAAPQPGPAHLSLTITLLMTARLWGGTLLWT.

Positions 1 to 22 (MGHPPLLPLLLLLHTCVPASWG) are cleaved as a signal peptide. UPAR/Ly6 domains lie at 23-114 (LRCM…RSRY), 115-213 (LECI…PQNG), and 214-305 (RQCY…YRSG). 3 disulfides stabilise this stretch: Cys25-Cys46, Cys28-Cys34, and Cys39-Cys67. Asn74 is a glycosylation site (N-linked (GlcNAc...) asparagine). Disulfide bonds link Cys93–Cys98, Cys117–Cys144, Cys120–Cys127, Cys137–Cys169, Cys175–Cys192, Cys193–Cys198, Cys216–Cys244, Cys219–Cys227, Cys237–Cys263, Cys269–Cys287, and Cys288–Cys293. Residues Asn184, Asn194, Asn222, and Asn255 are each glycosylated (N-linked (GlcNAc...) asparagine). Gly305 carries the GPI-anchor amidated glycine lipid modification. Positions 306-335 (AAPQPGPAHLSLTITLLMTARLWGGTLLWT) are cleaved as a propeptide — removed in mature form.

Monomer. Interacts with MRC2. Interacts (via the UPAR/Ly6 domains) with SRPX2. Interacts with FAP (seprase); the interaction occurs at the cell surface of invadopodia membrane. Interacts with SORL1 (via N-terminal ectodomain); this interaction decreases PLAUR internalization. The ternary complex composed of PLAUR-PLAU-SERPINE1 also interacts with SORL1. Interacts with CD82; this interaction prevents PLAUR from binding to its high affinity ligand PLAU. Expressed in neurons of the rolandic area of the brain (at protein level). Expressed in the brain.

It localises to the cell membrane. It is found in the cell projection. The protein resides in the invadopodium membrane. The protein localises to the secreted. Acts as a receptor for urokinase plasminogen activator. Plays a role in localizing and promoting plasmin formation. Mediates the proteolysis-independent signal transduction activation effects of U-PA. It is subject to negative-feedback regulation by U-PA which cleaves it into an inactive form. The chain is Urokinase plasminogen activator surface receptor (PLAUR) from Homo sapiens (Human).